The primary structure comprises 1199 residues: RNA-binding protein 20 (1199 aa).

3 disordered regions span residues 1–55 (MVLA…PQAS), 163–186 (PSTAIAFSPPSQTGGPGPSVSLPS), and 320–346 (ERPPGFSGQNKPDITAGPSLWAPPASQ). Residues 25 to 42 (VMPGVQGPSVPQGQQGMQ) are compositionally biased toward low complexity. Residues 43–52 (PLPPPPPPQP) show a composition bias toward pro residues. A compositionally biased stretch (low complexity) spans 170–183 (SPPSQTGGPGPSVS). Residues 410 to 444 (HLPHICSICDKKVFDLKDWELHVKGKLHAQKCLLF) form a U1-type zinc finger. The 76-residue stretch at 520 to 595 (RVVHICNLPE…EKLLIRMSTR (76 aa)) folds into the RRM domain. Residues 626–636 (EADRYGPERPR) show a composition bias toward basic and acidic residues. 3 disordered regions span residues 626-685 (EADR…NGED), 720-884 (REKY…YPTN), and 944-1077 (GETL…SQAC). The tract at residues 630–649 (YGPERPRSRSPMSRSLSPRS) is RS. Ser637, Ser639, Ser642, Ser644, and Ser651 each carry phosphoserine. Residues 638–649 (RSPMSRSLSPRS) show a composition bias toward low complexity. The segment covering 667–685 (YAWRDEDRETVPRRENGED) has biased composition (basic and acidic residues). A Phosphoserine modification is found at Ser728. Basic and acidic residues-rich tracts occupy residues 739-758 (KGREDGYHRKEPKAKLDKYP), 770-831 (RKEE…KESQ), and 859-868 (ENTRTKKGQD). Ser787 is modified (phosphoserine). Phosphoserine is present on residues Ser871, Ser873, and Ser955. Over residues 962–971 (VPSTSASCPN) the composition is skewed to polar residues. Phosphoserine is present on residues Ser991, Ser1026, Ser1038, Ser1049, Ser1054, Ser1058, Ser1070, Ser1088, and Ser1093. Over residues 1042–1055 (DDCKARGSPEDGSH) the composition is skewed to basic and acidic residues. Residues 1067–1077 (PTESDLQSQAC) show a composition bias toward polar residues. The Matrin-type zinc finger occupies 1133 to 1164 (FYCKLCGLFYTSEEAAKVSHCRSTVHYRNLQK). The tract at residues 1172–1199 (EGLKETEGTDSPSPERGGIGPHLERKKL) is disordered. A phosphoserine mark is found at Ser1182 and Ser1184.

In terms of assembly, associates with components of the U1 and U2 U1 small nuclear ribonucleoprotein complexes. Phosphorylation regulates the subcellular localization. Phosphorylation of Ser-637 and Ser-639 in the RS (arginine/serine-rich) region promotes nuclear localization of the protein. In contrast, phosphorylation of the C-terminal disordered region promotes localization to cytoplasmic ribonucleoprotein granules. Predominantly expressed in striated muscle, with highest expression in the heart. In differentiating myoblasts, expression correlates with sarcomere assembly: expression peaks when alpha-actinin is localized mainly in mature Z bodies within the nascent myofiber and expression declines as the sarcomeres continue to mature. Also expressed in kidney.

The protein resides in the nucleus. It localises to the cytoplasm. It is found in the cytoplasmic ribonucleoprotein granule. Its function is as follows. RNA-binding protein that acts as a regulator of mRNA splicing of a subset of genes encoding key structural proteins involved in cardiac development, such as TTN (Titin), CACNA1C, CAMK2D or PDLIM5/ENH. Acts as a repressor of mRNA splicing: specifically binds the 5'UCUU-3' motif that is predominantly found within intronic sequences of pre-mRNAs, leading to the exclusion of specific exons in target transcripts. RBM20-mediated exon skipping is hormone-dependent and is essential for TTN isoform transition in both cardiac and skeletal muscles. RBM20-mediated exon skipping of TTN provides substrates for the formation of circular RNA (circRNAs) from the TTN transcripts. Together with RBM24, promotes the expression of short isoforms of PDLIM5/ENH in cardiomyocytes. The sequence is that of RNA-binding protein 20 from Mus musculus (Mouse).